The following is a 360-amino-acid chain: MNAPLGGIWLWLPLLLTWLTPEVNSSWWYMRATGGSSRVMCDNVPGLVSSQRQLCHRHPDVMRAISQGVAEWTAECQHQFRQHRWNCNTLDRDHSLFGRVLLRSSRESAFVYAISSAGVVFAITRACSQGEVKSCSCDPKKMGSAKDSKGIFDWGGCSDNIDYGIKFARAFVDAKERKGKDARALMNLHNNRAGRKAVKRFLKQECKCHGVSGSCTLRTCWLAMADFRKTGDYLWRKYNGAIQVVMNQDGTGFTVANERFKKPTKNDLVYFENSPDYCIRDREAGSLGTAGRVCNLTSRGMDSCEVMCCGRGYDTSHVTRMTKCGCKFHWCCAVRCQDCLEALDVHTCKAPKNADWTTAT.

The signal sequence occupies residues 1-25 (MNAPLGGIWLWLPLLLTWLTPEVNS). 11 disulfides stabilise this stretch: Cys-76/Cys-87, Cys-127/Cys-135, Cys-137/Cys-157, Cys-206/Cys-220, Cys-208/Cys-215, Cys-278/Cys-309, Cys-294/Cys-304, Cys-308/Cys-348, Cys-324/Cys-339, Cys-326/Cys-336, and Cys-331/Cys-332. Ser-212 carries the O-palmitoleoyl serine; by PORCN lipid modification. Asn-295 is a glycosylation site (N-linked (GlcNAc...) asparagine).

Belongs to the Wnt family. Post-translationally, palmitoleoylation is required for efficient binding to frizzled receptors. Depalmitoleoylation leads to Wnt signaling pathway inhibition. In terms of tissue distribution, expressed in brain in the thalamus, in fetal and adult lung and in placenta.

The protein resides in the secreted. It is found in the extracellular space. The protein localises to the extracellular matrix. Functionally, ligand for members of the frizzled family of seven transmembrane receptors. Functions in the canonical Wnt signaling pathway that results in activation of transcription factors of the TCF/LEF family. Functions as a upstream regulator of FGF10 expression. Plays an important role in embryonic lung development. May contribute to embryonic brain development by regulating the proliferation of dopaminergic precursors and neurons. The polypeptide is Protein Wnt-2 (WNT2) (Homo sapiens (Human)).